Reading from the N-terminus, the 232-residue chain is Peptidoglycan-recognition protein LB (232 aa).

A signal peptide spans 1 to 15 (MTALGLVLLSMMGYS). The region spanning 53 to 179 (APYVIIHHSY…RQVRDTECPG (127 aa)) is the N-acetylmuramoyl-L-alanine amidase domain. His59 provides a ligand contact to Zn(2+). The cysteines at positions 67 and 73 are disulfide-linked. Zn(2+) is bound by residues His169 and Cys177. N-linked (GlcNAc...) asparagine glycosylation is present at Asn196. The tract at residues 213-232 (HPQAAAPQKPHQSPPAAPKV) is disordered.

The protein belongs to the N-acetylmuramoyl-L-alanine amidase 2 family. Monomer. Requires Zn(2+) as cofactor. In terms of tissue distribution, widely expressed.

The protein localises to the secreted. It carries out the reaction Hydrolyzes the link between N-acetylmuramoyl residues and L-amino acid residues in certain cell-wall glycopeptides.. Functionally, N-acetylmuramyl-L-alanine amidase involved in innate immunity by degrading bacterial peptidoglycans (PGN). Probably plays a scavenger role by digesting biologically active PGN into biologically inactive fragments. Has no direct bacteriolytic activity. The polypeptide is Peptidoglycan-recognition protein LB (PGRP-LB) (Drosophila melanogaster (Fruit fly)).